The following is an 86-amino-acid chain: Small ribosomal subunit protein bS18 (86 aa).

The protein belongs to the bacterial ribosomal protein bS18 family. As to quaternary structure, part of the 30S ribosomal subunit. Forms a tight heterodimer with protein bS6.

In terms of biological role, binds as a heterodimer with protein bS6 to the central domain of the 16S rRNA, where it helps stabilize the platform of the 30S subunit. The sequence is that of Small ribosomal subunit protein bS18 from Protochlamydia amoebophila (strain UWE25).